The sequence spans 169 residues: Large ribosomal subunit protein uL10 (169 aa).

The protein belongs to the universal ribosomal protein uL10 family. As to quaternary structure, part of the ribosomal stalk of the 50S ribosomal subunit. The N-terminus interacts with L11 and the large rRNA to form the base of the stalk. The C-terminus forms an elongated spine to which L12 dimers bind in a sequential fashion forming a multimeric L10(L12)X complex.

Functionally, forms part of the ribosomal stalk, playing a central role in the interaction of the ribosome with GTP-bound translation factors. In Rickettsia felis (strain ATCC VR-1525 / URRWXCal2) (Rickettsia azadi), this protein is Large ribosomal subunit protein uL10.